The chain runs to 425 residues: Amidase 1 (425 aa).

Ala-2 is modified (N-acetylalanine). Catalysis depends on charge relay system residues Lys-36 and Ser-113. Ser-137 functions as the Acyl-ester intermediate in the catalytic mechanism.

Belongs to the amidase family. In terms of tissue distribution, expressed in cotyledons, leaves and flower buds. Lower levels in roots, stems and siliques.

The protein localises to the cytoplasm. It localises to the nucleus. The protein resides in the nucleoplasm. The enzyme catalyses a monocarboxylic acid amide + H2O = a monocarboxylate + NH4(+). The catalysed reaction is indole-3-acetamide + H2O = (indol-3-yl)acetate + NH4(+). It catalyses the reaction 2-phenylacetamide + H2O = 2-phenylacetate + NH4(+). It carries out the reaction L-asparagine + H2O = L-aspartate + NH4(+). The enzyme catalyses 1-naphthaleneacetamide + H2O = 1-naphthaleneacetate + NH4(+). With respect to regulation, inhibited by phenylmethylsulfonyl fluoride (PMSF). In terms of biological role, amidase involved in auxin biosynthesis. Converts indole-3-acetamide to indole-3-acetate. Converts phenyl-2-acetamide (PAM) to phenyl-2-acetate. Substrate preference is PAM &gt; IAM. Can also use L-asparagine and 1-naphtalene-acetamide as substrates, but not indole-3-acetonitrile or indole-3-acetyl-L-aspartic acid. The sequence is that of Amidase 1 from Arabidopsis thaliana (Mouse-ear cress).